The primary structure comprises 218 residues: MSTEPAPLLALDLTGTFAFGLNGALTAVRAARLDVVGVVVLGMITALGGGVIRDVLIDSLPPAAFLDWRYYTLAAAGGLLAFAVSRHLRRLEPAITVLDAVGLSTFAVIGASKALDAGLAVVPAMLLGVITAVGGGTIRDTLVGRIPTVLRTGLYAIPALAGAAVTVATTETGVYGLPAALGAAAVCFLIRMLGLHFGINAPEPPETRPSGGGTRRQK.

A run of 7 helical transmembrane segments spans residues 8–28 (LLAL…LTAV), 37–57 (GVVV…DVLI), 64–84 (AFLD…AFAV), 91–111 (LEPA…VIGA), 118–138 (GLAV…GGTI), 154–174 (LYAI…ETGV), and 179–199 (AALG…HFGI).

It belongs to the UPF0126 family.

The protein localises to the cell membrane. The sequence is that of UPF0126 membrane protein SCO4104 from Streptomyces coelicolor (strain ATCC BAA-471 / A3(2) / M145).